Here is a 141-residue protein sequence, read N- to C-terminus: Hemoglobin subunit alpha-A (141 aa).

The Globin domain occupies 1–141 (VLSAADKTNV…VGTVLTAKYR (141 aa)). His58 contributes to the O2 binding site. His87 lines the heme b pocket.

It belongs to the globin family. As to quaternary structure, heterotetramer of two alpha chains and two beta chains. In terms of tissue distribution, red blood cells.

In terms of biological role, involved in oxygen transport from the lung to the various peripheral tissues. The chain is Hemoglobin subunit alpha-A (HBAA) from Turdus merula (Common blackbird).